We begin with the raw amino-acid sequence, 264 residues long: Phosphate import ATP-binding protein PstB (264 aa).

The ABC transporter domain occupies 11 to 250 (LKAEALSVYY…DTTEKIFDSP (240 aa)). ATP is bound at residue 43-50 (GPSGCGKS).

The protein belongs to the ABC transporter superfamily. Phosphate importer (TC 3.A.1.7) family. As to quaternary structure, the complex is composed of two ATP-binding proteins (PstB), two transmembrane proteins (PstC and PstA) and a solute-binding protein (PstS).

Its subcellular location is the cell inner membrane. The enzyme catalyses phosphate(out) + ATP + H2O = ADP + 2 phosphate(in) + H(+). Functionally, part of the ABC transporter complex PstSACB involved in phosphate import. Responsible for energy coupling to the transport system. The protein is Phosphate import ATP-binding protein PstB of Synechococcus sp. (strain ATCC 27144 / PCC 6301 / SAUG 1402/1) (Anacystis nidulans).